The following is an 854-amino-acid chain: Glucans biosynthesis glucosyltransferase H (854 aa).

Helical transmembrane passes span 155–175, 209–229, 528–548, 583–603, 619–639, 671–691, and 695–715; these read ILLALTLFQTAIATWYMKTIL, ILVLFAVLFCWVSAGFWTALM, VFLTGVMSYLSAPLWFMFLVL, IALFSTTLVLLFLPKLLSVIL, FLSLLLEMLFSVLLAPVRMLF, FVRHGSQLILGLVWAIGMAWL, and FLWWLSPIVFSLILSPVVSVY.

This sequence belongs to the glycosyltransferase 2 family. OpgH subfamily.

It is found in the cell inner membrane. It functions in the pathway glycan metabolism; osmoregulated periplasmic glucan (OPG) biosynthesis. Functionally, involved in the biosynthesis of osmoregulated periplasmic glucans (OPGs). The protein is Glucans biosynthesis glucosyltransferase H of Pectobacterium atrosepticum (strain SCRI 1043 / ATCC BAA-672) (Erwinia carotovora subsp. atroseptica).